The following is a 476-amino-acid chain: Aspartyl/glutamyl-tRNA(Asn/Gln) amidotransferase subunit B (476 aa).

The protein belongs to the GatB/GatE family. GatB subfamily. In terms of assembly, heterotrimer of A, B and C subunits.

It carries out the reaction L-glutamyl-tRNA(Gln) + L-glutamine + ATP + H2O = L-glutaminyl-tRNA(Gln) + L-glutamate + ADP + phosphate + H(+). The catalysed reaction is L-aspartyl-tRNA(Asn) + L-glutamine + ATP + H2O = L-asparaginyl-tRNA(Asn) + L-glutamate + ADP + phosphate + 2 H(+). In terms of biological role, allows the formation of correctly charged Asn-tRNA(Asn) or Gln-tRNA(Gln) through the transamidation of misacylated Asp-tRNA(Asn) or Glu-tRNA(Gln) in organisms which lack either or both of asparaginyl-tRNA or glutaminyl-tRNA synthetases. The reaction takes place in the presence of glutamine and ATP through an activated phospho-Asp-tRNA(Asn) or phospho-Glu-tRNA(Gln). In Bacillus velezensis (strain DSM 23117 / BGSC 10A6 / LMG 26770 / FZB42) (Bacillus amyloliquefaciens subsp. plantarum), this protein is Aspartyl/glutamyl-tRNA(Asn/Gln) amidotransferase subunit B.